The primary structure comprises 105 residues: Flagellar transcriptional regulator FlhD (105 aa).

The protein belongs to the FlhD family. Homodimer; disulfide-linked. Forms a heterohexamer composed of two FlhC and four FlhD subunits. Each FlhC binds a FlhD dimer, forming a heterotrimer, and a hexamer assembles by dimerization of two heterotrimers.

The protein resides in the cytoplasm. Functionally, functions in complex with FlhC as a master transcriptional regulator that regulates transcription of several flagellar and non-flagellar operons by binding to their promoter region. Activates expression of class 2 flagellar genes, including fliA, which is a flagellum-specific sigma factor that turns on the class 3 genes. Also regulates genes whose products function in a variety of physiological pathways. The polypeptide is Flagellar transcriptional regulator FlhD (Cupriavidus necator (strain ATCC 17699 / DSM 428 / KCTC 22496 / NCIMB 10442 / H16 / Stanier 337) (Ralstonia eutropha)).